Here is a 165-residue protein sequence, read N- to C-terminus: Neurotrophin-3 (165 aa).

An N-terminal signal peptide occupies residues 1–3 (IQS). Residues 4 to 119 (TSMDQGSLSE…VLNRTSRRKR (116 aa)) constitute a propeptide that is removed on maturation. Residues 32–61 (KVPKQAARTKDGTQTTAKKTEAEPEATANK) are disordered. A glycan (N-linked (GlcNAc...) asparagine) is linked at Asn112.

Belongs to the NGF-beta family.

It localises to the secreted. Functionally, seems to promote the survival of visceral and proprioceptive sensory neurons. This is Neurotrophin-3 (NTF3) from Xenopeltis unicolor (Sunbeam snake).